Here is a 317-residue protein sequence, read N- to C-terminus: Thymidylate synthase (317 aa).

DUMP contacts are provided by residues arginine 24 and 179 to 180; that span reads RR. Cysteine 199 functions as the Nucleophile in the catalytic mechanism. DUMP-binding positions include 219 to 222, asparagine 230, and 260 to 262; these read RSAD and HIY. Aspartate 222 serves as a coordination point for (6R)-5,10-methylene-5,6,7,8-tetrahydrofolate. A (6R)-5,10-methylene-5,6,7,8-tetrahydrofolate-binding site is contributed by alanine 316.

This sequence belongs to the thymidylate synthase family. Bacterial-type ThyA subfamily. In terms of assembly, homodimer.

Its subcellular location is the cytoplasm. It catalyses the reaction dUMP + (6R)-5,10-methylene-5,6,7,8-tetrahydrofolate = 7,8-dihydrofolate + dTMP. It participates in pyrimidine metabolism; dTTP biosynthesis. Functionally, catalyzes the reductive methylation of 2'-deoxyuridine-5'-monophosphate (dUMP) to 2'-deoxythymidine-5'-monophosphate (dTMP) while utilizing 5,10-methylenetetrahydrofolate (mTHF) as the methyl donor and reductant in the reaction, yielding dihydrofolate (DHF) as a by-product. This enzymatic reaction provides an intracellular de novo source of dTMP, an essential precursor for DNA biosynthesis. This Oceanobacillus iheyensis (strain DSM 14371 / CIP 107618 / JCM 11309 / KCTC 3954 / HTE831) protein is Thymidylate synthase.